The sequence spans 249 residues: Pyridoxine 5'-phosphate synthase (249 aa).

Position 7 (Asn-7) interacts with 3-amino-2-oxopropyl phosphate. Position 9–10 (9–10 (DH)) interacts with 1-deoxy-D-xylulose 5-phosphate. Arg-18 lines the 3-amino-2-oxopropyl phosphate pocket. Residue His-43 is the Proton acceptor of the active site. Positions 45 and 50 each coordinate 1-deoxy-D-xylulose 5-phosphate. Glu-70 functions as the Proton acceptor in the catalytic mechanism. Thr-100 serves as a coordination point for 1-deoxy-D-xylulose 5-phosphate. His-190 serves as the catalytic Proton donor. 3-amino-2-oxopropyl phosphate contacts are provided by residues Gly-191 and 212–213 (GH).

It belongs to the PNP synthase family. Homooctamer; tetramer of dimers.

The protein localises to the cytoplasm. It carries out the reaction 3-amino-2-oxopropyl phosphate + 1-deoxy-D-xylulose 5-phosphate = pyridoxine 5'-phosphate + phosphate + 2 H2O + H(+). It participates in cofactor biosynthesis; pyridoxine 5'-phosphate biosynthesis; pyridoxine 5'-phosphate from D-erythrose 4-phosphate: step 5/5. Functionally, catalyzes the complicated ring closure reaction between the two acyclic compounds 1-deoxy-D-xylulose-5-phosphate (DXP) and 3-amino-2-oxopropyl phosphate (1-amino-acetone-3-phosphate or AAP) to form pyridoxine 5'-phosphate (PNP) and inorganic phosphate. This is Pyridoxine 5'-phosphate synthase from Synechococcus sp. (strain CC9605).